Reading from the N-terminus, the 417-residue chain is Serine hydroxymethyltransferase (417 aa).

Residues L121 and 125–127 (GHL) contribute to the (6S)-5,6,7,8-tetrahydrofolate site. K229 is modified (N6-(pyridoxal phosphate)lysine). 355 to 357 (SPF) provides a ligand contact to (6S)-5,6,7,8-tetrahydrofolate.

The protein belongs to the SHMT family. As to quaternary structure, homodimer. It depends on pyridoxal 5'-phosphate as a cofactor.

The protein localises to the cytoplasm. It catalyses the reaction (6R)-5,10-methylene-5,6,7,8-tetrahydrofolate + glycine + H2O = (6S)-5,6,7,8-tetrahydrofolate + L-serine. It participates in one-carbon metabolism; tetrahydrofolate interconversion. The protein operates within amino-acid biosynthesis; glycine biosynthesis; glycine from L-serine: step 1/1. Functionally, catalyzes the reversible interconversion of serine and glycine with tetrahydrofolate (THF) serving as the one-carbon carrier. This reaction serves as the major source of one-carbon groups required for the biosynthesis of purines, thymidylate, methionine, and other important biomolecules. Also exhibits THF-independent aldolase activity toward beta-hydroxyamino acids, producing glycine and aldehydes, via a retro-aldol mechanism. In Xanthomonas axonopodis pv. citri (strain 306), this protein is Serine hydroxymethyltransferase.